A 118-amino-acid chain; its full sequence is Small ribosomal subunit protein uS13 (118 aa).

Residues 99-118 are disordered; it reads GQRTRTNARTRKGPRKAIKK.

This sequence belongs to the universal ribosomal protein uS13 family. In terms of assembly, part of the 30S ribosomal subunit. Forms a loose heterodimer with protein S19. Forms two bridges to the 50S subunit in the 70S ribosome.

Functionally, located at the top of the head of the 30S subunit, it contacts several helices of the 16S rRNA. In the 70S ribosome it contacts the 23S rRNA (bridge B1a) and protein L5 of the 50S subunit (bridge B1b), connecting the 2 subunits; these bridges are implicated in subunit movement. Contacts the tRNAs in the A and P-sites. This chain is Small ribosomal subunit protein uS13, found in Xylella fastidiosa (strain M23).